Here is a 1133-residue protein sequence, read N- to C-terminus: Probable cation-transporting ATPase 9 (1133 aa).

Topologically, residues 1-6 (MRVSSI) are cytoplasmic. Residues 7 to 28 (EAEMENPIDVDKTDVEGELKIK) form a helical membrane-spanning segment. Residues 29–34 (QVTLLR) lie on the Extracellular side of the membrane. The chain crosses the membrane as a helical span at residues 35–53 (ENIVKKIVFFLVAIFCSDR). Over 54 to 167 (PSVLKKVFYE…IEINVPSFLT (114 aa)) the chain is Cytoplasmic. A helical transmembrane segment spans residues 168–190 (LMWREFKKPINFLLYFGIIVWGI). At 191 to 193 (EQM) the chain is on the extracellular side. A helical membrane pass occupies residues 194–212 (YVSTAITVVFTTTINSLIC). Residues 213–363 (IYIRGVMQKL…PFNKKFQQQA (151 aa)) lie on the Cytoplasmic side of the membrane. A helical membrane pass occupies residues 364–383 (VKLTILMATLLLIGFLSTLS). Residues 384–396 (RLLDIELPPLFIA) lie on the Extracellular side of the membrane. The helical transmembrane segment at 397 to 418 (FRFLDILIYSAPPGMPMLIAIT) threads the bilayer. At 419–887 (NFVGLKRLKN…NSVEIFKGYL (469 aa)) the chain is on the cytoplasmic side. Asp-451 (4-aspartylphosphate intermediate) is an active-site residue. Mg(2+)-binding residues include Asp-827 and Asp-831. A helical transmembrane segment spans residues 888–906 (QVALLRYLGFLTLAYFYSS). Over 907-915 (YSSGQMDWQ) the chain is Extracellular. Residues 916 to 931 (ALASGYFLVYLILGCN) traverse the membrane as a helical segment. At 932 to 948 (TPLKKLEKSVFDDNLFS) the chain is on the cytoplasmic side. The helical transmembrane segment at 949–972 (IYNVTSVLFGFTLHILSIVGCVES) threads the bilayer. Over 973–994 (LHASPIYKEVNSLDAENNFQFE) the chain is Extracellular. Residues 995–1018 (TQHNTVLNFNILINFFYVIISNHI) traverse the membrane as a helical segment. The Cytoplasmic portion of the chain corresponds to 1019-1030 (GKPMKDRYYKNT). Residues 1031-1050 (IAIYYDLGLIYTCKCMILQV) form a helical membrane-spanning segment. Over 1051–1101 (LLILEHTHHGLIFLILLLDQEFSSSLTVQVYFSLPMNLFLPEEFSLNFTQE) the chain is Extracellular. The chain crosses the membrane as a helical span at residues 1102–1124 (VKKEKELLICNSSSTILEVDYNL). Over 1125 to 1133 (RLNYFQQNF) the chain is Cytoplasmic.

This sequence belongs to the cation transport ATPase (P-type) (TC 3.A.3) family. Type V subfamily.

It localises to the membrane. The enzyme catalyses ATP + H2O = ADP + phosphate + H(+). The sequence is that of Probable cation-transporting ATPase 9 (TPA9) from Tetrahymena thermophila.